The primary structure comprises 295 residues: Methylamine utilization protein MauJ (295 aa).

The protein operates within one-carbon metabolism; methylamine degradation. The polypeptide is Methylamine utilization protein MauJ (mauJ) (Methylorubrum extorquens (strain ATCC 14718 / DSM 1338 / JCM 2805 / NCIMB 9133 / AM1) (Methylobacterium extorquens)).